Reading from the N-terminus, the 208-residue chain is Protein JLP2 (208 aa).

Residues 185 to 194 are compositionally biased toward basic residues; that stretch reads AKKNQKKKNK. Positions 185 to 208 are disordered; the sequence is AKKNQKKKNKQSKDEVTDDMQLEV.

The protein belongs to the CCDC25 family.

It localises to the cytoplasm. The protein is Protein JLP2 (JLP2) of Saccharomyces cerevisiae (strain ATCC 204508 / S288c) (Baker's yeast).